The primary structure comprises 931 residues: Protocadherin gamma-A4 (931 aa).

The N-terminal stretch at 1–28 is a signal peptide; that stretch reads MAAPPARPDHTRLLHICLLLGVLVEIRA. 6 Cadherin domains span residues 29–133, 134–242, 243–347, 348–452, 453–567, and 570–682; these read EQIR…PPSF, GTEQ…APVF, TQPE…APEV, TVTS…PPTF, PHAS…YPTF, and DDST…KPSA. Over 29–692 the chain is Extracellular; it reads EQIRYSVFEE…DPDDSGLTLY (664 aa). Residues N419 and N545 are each glycosylated (N-linked (GlcNAc...) asparagine). The helical transmembrane segment at 693 to 713 threads the bilayer; the sequence is LVVSVAAVSCVFLAFVTVLLA. At 714-931 the chain is on the cytoplasmic side; it reads LKLRRWHKSR…KKKSGKKEKK (218 aa). Disordered regions lie at residues 801 to 840 and 901 to 931; these read KGDP…WPNN and ATLT…KEKK. The span at 805–840 shows a compositional bias: polar residues; sequence NLQQAPPNTDWRFSQAQRPGTSGSQNGDDTGTWPNN. Positions 921–931 are enriched in basic residues; it reads NKKKSGKKEKK.

The protein localises to the cell membrane. Functionally, potential calcium-dependent cell-adhesion protein. May be involved in the establishment and maintenance of specific neuronal connections in the brain. This is Protocadherin gamma-A4 (PCDHGA4) from Pan troglodytes (Chimpanzee).